The sequence spans 274 residues: Large ribosomal subunit protein uL2 (274 aa).

Disordered stretches follow at residues 28-53 (APYAPLLEKNSKSGGRNNNGRITVRH) and 223-274 (VAMN…RRNK). Low complexity predominate over residues 39-48 (KSGGRNNNGR).

It belongs to the universal ribosomal protein uL2 family. As to quaternary structure, part of the 50S ribosomal subunit. Forms a bridge to the 30S subunit in the 70S ribosome.

One of the primary rRNA binding proteins. Required for association of the 30S and 50S subunits to form the 70S ribosome, for tRNA binding and peptide bond formation. It has been suggested to have peptidyltransferase activity; this is somewhat controversial. Makes several contacts with the 16S rRNA in the 70S ribosome. This is Large ribosomal subunit protein uL2 from Pseudoalteromonas atlantica (strain T6c / ATCC BAA-1087).